We begin with the raw amino-acid sequence, 416 residues long: Glutamyl-tRNA reductase (416 aa).

Substrate-binding positions include 48 to 51, S104, 109 to 111, and Q115; these read TCNR and EPQ. C49 functions as the Nucleophile in the catalytic mechanism. Residue 184–189 participates in NADP(+) binding; it reads GAGEMI.

This sequence belongs to the glutamyl-tRNA reductase family. Homodimer.

The enzyme catalyses (S)-4-amino-5-oxopentanoate + tRNA(Glu) + NADP(+) = L-glutamyl-tRNA(Glu) + NADPH + H(+). The protein operates within porphyrin-containing compound metabolism; protoporphyrin-IX biosynthesis; 5-aminolevulinate from L-glutamyl-tRNA(Glu): step 1/2. Functionally, catalyzes the NADPH-dependent reduction of glutamyl-tRNA(Glu) to glutamate 1-semialdehyde (GSA). This chain is Glutamyl-tRNA reductase, found in Dechloromonas aromatica (strain RCB).